Consider the following 82-residue polypeptide: Small ribosomal subunit protein uS17 (82 aa).

Belongs to the universal ribosomal protein uS17 family. As to quaternary structure, part of the 30S ribosomal subunit.

One of the primary rRNA binding proteins, it binds specifically to the 5'-end of 16S ribosomal RNA. The chain is Small ribosomal subunit protein uS17 from Rhodopseudomonas palustris (strain TIE-1).